The sequence spans 225 residues: Phosphatidylserine decarboxylase proenzyme (225 aa).

Catalysis depends on Ser-182, which acts as the Schiff-base intermediate with substrate; via pyruvic acid. Ser-182 bears the Pyruvic acid (Ser); by autocatalysis mark.

This sequence belongs to the phosphatidylserine decarboxylase family. PSD-A subfamily. As to quaternary structure, heterodimer of a large membrane-associated beta subunit and a small pyruvoyl-containing alpha subunit. The cofactor is pyruvate. In terms of processing, is synthesized initially as an inactive proenzyme. Formation of the active enzyme involves a self-maturation process in which the active site pyruvoyl group is generated from an internal serine residue via an autocatalytic post-translational modification. Two non-identical subunits are generated from the proenzyme in this reaction, and the pyruvate is formed at the N-terminus of the alpha chain, which is derived from the carboxyl end of the proenzyme. The post-translation cleavage follows an unusual pathway, termed non-hydrolytic serinolysis, in which the side chain hydroxyl group of the serine supplies its oxygen atom to form the C-terminus of the beta chain, while the remainder of the serine residue undergoes an oxidative deamination to produce ammonia and the pyruvoyl prosthetic group on the alpha chain.

It is found in the cell membrane. The enzyme catalyses a 1,2-diacyl-sn-glycero-3-phospho-L-serine + H(+) = a 1,2-diacyl-sn-glycero-3-phosphoethanolamine + CO2. Its pathway is phospholipid metabolism; phosphatidylethanolamine biosynthesis; phosphatidylethanolamine from CDP-diacylglycerol: step 2/2. In terms of biological role, catalyzes the formation of phosphatidylethanolamine (PtdEtn) from phosphatidylserine (PtdSer). This is Phosphatidylserine decarboxylase proenzyme from Neorickettsia sennetsu (strain ATCC VR-367 / Miyayama) (Ehrlichia sennetsu).